We begin with the raw amino-acid sequence, 199 residues long: 5'-deoxynucleotidase KPK_1466 (199 aa).

Substrate-binding positions include 18 to 19 (RW) and His33. The region spanning 30 to 142 (VSEHSLQVAM…VKQADALCAY (113 aa)) is the HD domain. A divalent metal cation contacts are provided by His33, His68, and Asp69. Residues Asp69, 77 to 80 (DLPT), and Asp137 each bind substrate. Residue Asp137 coordinates a divalent metal cation.

This sequence belongs to the 5DNU family. In terms of assembly, homodimer. It depends on a divalent metal cation as a cofactor.

Its subcellular location is the cytoplasm. It carries out the reaction a 2'-deoxyribonucleoside 5'-phosphate + H2O = a 2'-deoxyribonucleoside + phosphate. Functionally, catalyzes the strictly specific dephosphorylation of 2'-deoxyribonucleoside 5'-monophosphates. The sequence is that of 5'-deoxynucleotidase KPK_1466 from Klebsiella pneumoniae (strain 342).